A 118-amino-acid chain; its full sequence is uncharacterized protein (118 aa).

The chain crosses the membrane as a helical span at residues 21–38 (IVYFFFFFGLETFFSIIN).

It localises to the membrane. This is an uncharacterized protein from Dictyostelium discoideum (Social amoeba).